A 403-amino-acid chain; its full sequence is CCA-adding enzyme (403 aa).

Residues glycine 32 and arginine 35 each coordinate ATP. Residues glycine 32 and arginine 35 each contribute to the CTP site. Residues aspartate 45 and aspartate 47 each coordinate Mg(2+). Arginine 116, aspartate 159, arginine 162, arginine 165, and arginine 168 together coordinate ATP. Residues arginine 116, aspartate 159, arginine 162, arginine 165, and arginine 168 each coordinate CTP.

Belongs to the tRNA nucleotidyltransferase/poly(A) polymerase family. Bacterial CCA-adding enzyme type 3 subfamily. In terms of assembly, homodimer. Requires Mg(2+) as cofactor.

It catalyses the reaction a tRNA precursor + 2 CTP + ATP = a tRNA with a 3' CCA end + 3 diphosphate. It carries out the reaction a tRNA with a 3' CCA end + 2 CTP + ATP = a tRNA with a 3' CCACCA end + 3 diphosphate. In terms of biological role, catalyzes the addition and repair of the essential 3'-terminal CCA sequence in tRNAs without using a nucleic acid template. Adds these three nucleotides in the order of C, C, and A to the tRNA nucleotide-73, using CTP and ATP as substrates and producing inorganic pyrophosphate. tRNA 3'-terminal CCA addition is required both for tRNA processing and repair. Also involved in tRNA surveillance by mediating tandem CCA addition to generate a CCACCA at the 3' terminus of unstable tRNAs. While stable tRNAs receive only 3'-terminal CCA, unstable tRNAs are marked with CCACCA and rapidly degraded. This chain is CCA-adding enzyme, found in Streptococcus uberis (strain ATCC BAA-854 / 0140J).